A 341-amino-acid chain; its full sequence is Spore photoproduct lyase (341 aa).

One can recognise a Radical SAM core domain in the interval 76-304; sequence SKPSAEYAIP…ESKRKYKWGR (229 aa). Positions 90, 94, and 97 each coordinate [4Fe-4S] cluster. The segment at residues 217 to 234 is a DNA-binding region (H-T-H motif); the sequence is QAARKVAGAGYKLGFVVA.

This sequence belongs to the radical SAM superfamily. SPL family. In terms of assembly, monomer or homodimer. It depends on [4Fe-4S] cluster as a cofactor. The cofactor is S-adenosyl-L-methionine.

It carries out the reaction (5R)-5,6-dihydro-5-(thymidin-7-yl)thymidine in DNA = a thymidine dimer in DNA. Its function is as follows. Involved in repair of UV radiation-induced DNA damage during spore germination. Can repair thymine dimer 5-thyminyl-5,6-dihydrothymine (known as spore photoproduct (SP)) by in situ monomerization of SP to two thymines. This chain is Spore photoproduct lyase (splG), found in Geobacillus sp. (strain Y412MC61).